Reading from the N-terminus, the 73-residue chain is Cx9C motif-containing protein 4, mitochondrial (73 aa).

The region spanning 2-44 (SNPCQKEACAIQDCLLSHQYDDAKCAKVIDQLYICCSKFYNDN) is the CHCH domain. 2 short sequence motifs (cx9C motif) span residues 5–15 (CQKEACAIQDC) and 26–36 (CAKVIDQLYIC). Intrachain disulfides connect Cys-5/Cys-36 and Cys-15/Cys-26.

Belongs to the CMC4 family.

The protein localises to the mitochondrion intermembrane space. The polypeptide is Cx9C motif-containing protein 4, mitochondrial (CMC4) (Saccharomyces cerevisiae (strain ATCC 204508 / S288c) (Baker's yeast)).